The chain runs to 353 residues: Serine/threonine-protein kinase SRK2G (353 aa).

Residues 4–260 (YDVVKDLGAG…LKEIKNHPWY (257 aa)) form the Protein kinase domain. ATP contacts are provided by residues 10–18 (LGAGNFGVA) and Lys-33. The active-site Proton acceptor is Asp-123. The disordered stretch occupies residues 299–353 (RNPAPSTSAVKSSGSGADEEEEEDVEAEVEEEEDDEDEYEKHVKEAQSCQESDKA). A compositionally biased stretch (polar residues) spans 302-313 (APSTSAVKSSGS). The span at 315 to 336 (ADEEEEEDVEAEVEEEEDDEDE) shows a compositional bias: acidic residues. Basic and acidic residues predominate over residues 337-353 (YEKHVKEAQSCQESDKA).

This sequence belongs to the protein kinase superfamily. Ser/Thr protein kinase family. Expressed in seedlings.

It is found in the nucleus. The enzyme catalyses L-seryl-[protein] + ATP = O-phospho-L-seryl-[protein] + ADP + H(+). The catalysed reaction is L-threonyl-[protein] + ATP = O-phospho-L-threonyl-[protein] + ADP + H(+). The sequence is that of Serine/threonine-protein kinase SRK2G (SRK2G) from Arabidopsis thaliana (Mouse-ear cress).